The primary structure comprises 119 residues: MVKLAFPRELRLLTPSHFTFVFQQPQRAGTPQITILGRLNELGHPRIGLTVAKKHVKRAHERNRIKRLTRESFRLHQHALPSMDFVVLVKKGVADLDNRALTEALEKLWRRHCRQAPAS.

The protein belongs to the RnpA family. As to quaternary structure, consists of a catalytic RNA component (M1 or rnpB) and a protein subunit.

It carries out the reaction Endonucleolytic cleavage of RNA, removing 5'-extranucleotides from tRNA precursor.. Functionally, RNaseP catalyzes the removal of the 5'-leader sequence from pre-tRNA to produce the mature 5'-terminus. It can also cleave other RNA substrates such as 4.5S RNA. The protein component plays an auxiliary but essential role in vivo by binding to the 5'-leader sequence and broadening the substrate specificity of the ribozyme. This is Ribonuclease P protein component from Yersinia pseudotuberculosis serotype O:1b (strain IP 31758).